The primary structure comprises 313 residues: E3 ubiquitin-protein ligase SGIP1 (313 aa).

The region spanning 16–65 (REYSKEIPIDLLIEIFSRLSTGDIARCRCVSKIWSSVPRLRDFTELFLKI) is the F-box domain.

Interacts with SGS3 in cytoplasmic granules.

It is found in the cytoplasmic granule. It catalyses the reaction S-ubiquitinyl-[E2 ubiquitin-conjugating enzyme]-L-cysteine + [acceptor protein]-L-lysine = [E2 ubiquitin-conjugating enzyme]-L-cysteine + N(6)-ubiquitinyl-[acceptor protein]-L-lysine.. It functions in the pathway protein degradation; proteasomal ubiquitin-dependent pathway. Its pathway is protein modification; protein ubiquitination. E3 ubiquitin-protein ligase which triggers the ubiquitination and subsequent degradation of SGS3 in response to heat. Involved in the mechanisms necessary for quick response to heat and subsequent heritable transgenerational memory of heat acclimation (global warming) such as early flowering and attenuated immunity; this process includes epigenetic regulation as well as post-transcriptional gene silencing (PTGS). In response to heat, HSFA2 is activated and promotes the expression of REF6 which in turn derepresses HSFA2, thus establishing an inheritable feedback loop able to trigger SGIP1 and subsequent SGIP1-mediated SGS3 degradation; this prevents the biosynthesis of trans-acting siRNA (tasiRNA) and leads to the release of HTT5, which drives early flowering but attenuates immunity. The sequence is that of E3 ubiquitin-protein ligase SGIP1 from Arabidopsis thaliana (Mouse-ear cress).